Consider the following 960-residue polypeptide: Putative helicase L207/L206 (960 aa).

Residues 1–32 (MTSKTENKKSVSSKTGRTTNNSTNKKTTEKSV) are disordered. Low complexity predominate over residues 12 to 25 (SSKTGRTTNNSTNK). Positions 646 to 807 (SMREYILTLL…FIKHSEATKK (162 aa)) constitute an SF3 helicase domain.

In Acanthamoeba polyphaga mimivirus (APMV), this protein is Putative helicase L207/L206.